The following is a 465-amino-acid chain: GTPase Der (465 aa).

EngA-type G domains are found at residues 3–167 (PLVA…PEEG) and 179–352 (VRIA…ASAT). Residues 9–16 (GRPNVGKS), 57–61 (DTGGI), 119–122 (NKID), 185–192 (GRPNVGKS), 232–236 (DTAGL), and 297–300 (NKWD) contribute to the GTP site. Positions 353-437 (HEFSTSEVNQ…PVCFIFREGA (85 aa)) constitute a KH-like domain.

It belongs to the TRAFAC class TrmE-Era-EngA-EngB-Septin-like GTPase superfamily. EngA (Der) GTPase family. Associates with the 50S ribosomal subunit.

GTPase that plays an essential role in the late steps of ribosome biogenesis. This is GTPase Der from Xanthomonas oryzae pv. oryzae (strain MAFF 311018).